The following is a 109-amino-acid chain: Keratin, type II microfibrillar (109 aa).

A linker 1 region spans residues 1–10; sequence QNRQCCESNL. Residues 1–109 form the IF rod domain; the sequence is QNRQCCESNL…RLYEEEIRVL (109 aa). The segment at 11 to 109 is coil 1B; the sequence is EPLFSGYIET…RLYEEEIRVL (99 aa).

The protein belongs to the intermediate filament family.

In terms of biological role, wool microfibrillar keratin. The chain is Keratin, type II microfibrillar from Ovis aries (Sheep).